Here is a 164-residue protein sequence, read N- to C-terminus: FMN reductase (NADH) RutF (164 aa).

The protein belongs to the non-flavoprotein flavin reductase family. RutF subfamily.

The enzyme catalyses FMNH2 + NAD(+) = FMN + NADH + 2 H(+). Catalyzes the reduction of FMN to FMNH2 which is used to reduce pyrimidine by RutA via the Rut pathway. This is FMN reductase (NADH) RutF from Escherichia coli O127:H6 (strain E2348/69 / EPEC).